The following is a 490-amino-acid chain: Betaine aldehyde dehydrogenase (490 aa).

Residues T26, I27, and D93 each contribute to the K(+) site. 150 to 152 (GAW) is an NAD(+) binding site. Catalysis depends on K162, which acts as the Charge relay system. 176-179 (KPSE) is a binding site for NAD(+). V180 contacts K(+). Position 230–233 (230–233 (GVAS)) interacts with NAD(+). L246 contacts K(+). Residue E252 is the Proton acceptor of the active site. NAD(+) is bound by residues G254, C286, and E387. Residue C286 is the Nucleophile of the active site. Cysteine sulfenic acid (-SOH) is present on C286. K(+) contacts are provided by K457 and G460. Catalysis depends on E464, which acts as the Charge relay system.

The protein belongs to the aldehyde dehydrogenase family. As to quaternary structure, dimer of dimers. The cofactor is K(+).

It carries out the reaction betaine aldehyde + NAD(+) + H2O = glycine betaine + NADH + 2 H(+). Its pathway is amine and polyamine biosynthesis; betaine biosynthesis via choline pathway; betaine from betaine aldehyde: step 1/1. In terms of biological role, involved in the biosynthesis of the osmoprotectant glycine betaine. Catalyzes the irreversible oxidation of betaine aldehyde to the corresponding acid. This is Betaine aldehyde dehydrogenase from Klebsiella pneumoniae (strain 342).